Reading from the N-terminus, the 339-residue chain is DNA-directed RNA polymerase subunit alpha (339 aa).

Residues Met-1–Asp-235 are alpha N-terminal domain (alpha-NTD). The alpha C-terminal domain (alpha-CTD) stretch occupies residues Phe-251–Phe-339.

This sequence belongs to the RNA polymerase alpha chain family. In terms of assembly, homodimer. The RNAP catalytic core consists of 2 alpha, 1 beta, 1 beta' and 1 omega subunit. When a sigma factor is associated with the core the holoenzyme is formed, which can initiate transcription.

The enzyme catalyses RNA(n) + a ribonucleoside 5'-triphosphate = RNA(n+1) + diphosphate. DNA-dependent RNA polymerase catalyzes the transcription of DNA into RNA using the four ribonucleoside triphosphates as substrates. The chain is DNA-directed RNA polymerase subunit alpha from Gluconobacter oxydans (strain 621H) (Gluconobacter suboxydans).